A 350-amino-acid chain; its full sequence is Ornithine cyclodeaminase (350 aa).

Arg-45 and Lys-69 together coordinate L-ornithine. Residues Thr-84, Arg-112, 139 to 140 (AQ), Asp-161, Thr-202, 225 to 228 (VGGD), Lys-232, and Ser-293 each bind NAD(+). Residue Arg-112 participates in L-ornithine binding. Asp-228 is an L-ornithine binding site. The active-site Proton donor/acceptor is the Asp-228. Val-294 contributes to the L-ornithine binding site. Position 331 (Lys-331) interacts with NAD(+).

The protein belongs to the ornithine cyclodeaminase/mu-crystallin family. As to quaternary structure, homodimer. The cofactor is NAD(+).

It catalyses the reaction L-ornithine = L-proline + NH4(+). It participates in amino-acid biosynthesis; L-proline biosynthesis; L-proline from L-ornithine: step 1/1. Catalyzes the conversion of L-ornithine into L-proline with release of ammonia. Is likely involved in the L-ornithine degradation pathway that allows P.putida to utilize this compound as sole carbon and nitrogen source. This chain is Ornithine cyclodeaminase, found in Pseudomonas putida (strain ATCC 47054 / DSM 6125 / CFBP 8728 / NCIMB 11950 / KT2440).